Reading from the N-terminus, the 144-residue chain is Austinoid biosynthesis cluster protein S (144 aa).

Belongs to the trt14 isomerase family. Homodimer.

It functions in the pathway secondary metabolite biosynthesis; terpenoid biosynthesis. Functionally, part of the gene cluster that mediates the biosynthesis of calidodehydroaustin, a fungal meroterpenoid. The first step of the pathway is the synthesis of 3,5-dimethylorsellinic acid by the polyketide synthase ausA. 3,5-dimethylorsellinic acid is then prenylated by the polyprenyl transferase ausN. Further epoxidation by the FAD-dependent monooxygenase ausM and cyclization by the probable terpene cyclase ausL lead to the formation of protoaustinoid A. Protoaustinoid A is then oxidized to spiro-lactone preaustinoid A3 by the combined action of the FAD-binding monooxygenases ausB and ausC, and the dioxygenase ausE. Acid-catalyzed keto-rearrangement and ring contraction of the tetraketide portion of preaustinoid A3 by ausJ lead to the formation of preaustinoid A4. The aldo-keto reductase ausK, with the help of ausH, is involved in the next step by transforming preaustinoid A4 into isoaustinone which is in turn hydroxylated by the P450 monooxygenase ausI to form austinolide. The cytochrome P450 monooxygenase ausG modifies austinolide to austinol. Austinol is further acetylated to austin by the O-acetyltransferase ausP, which spontaneously changes to dehydroaustin. The cytochrome P450 monooxygenase ausR then converts dehydroaustin is into 7-dehydrodehydroaustin. The hydroxylation catalyzed by ausR permits the O-acetyltransferase ausQ to add an additional acetyl group to the molecule, leading to the formation of acetoxydehydroaustin. The short chain dehydrogenase ausT catalyzes the reduction of the double bond present between carbon atoms 1 and 2 to convert 7-dehydrodehydroaustin into 1,2-dihydro-7-hydroxydehydroaustin. AusQ catalyzes not only an acetylation reaction but also the addition of the PKS ausV diketide product to 1,2-dihydro-7-hydroxydehydroaustin, forming precalidodehydroaustin. Finally, the iron/alpha-ketoglutarate-dependent dioxygenase converts precalidodehydroaustin into calidodehydroaustin. AusS is necessary for austinoids production and may play a possible function as a regulator. In terms of biological role, may play a possible function as a regulator. The protein is Austinoid biosynthesis cluster protein S of Aspergillus calidoustus.